We begin with the raw amino-acid sequence, 193 residues long: Orotate phosphoribosyltransferase (193 aa).

5-phospho-alpha-D-ribose 1-diphosphate contacts are provided by residues arginine 85, lysine 89, histidine 91, and 111–119; that span reads DDVLTTGKS. Orotate contacts are provided by threonine 115 and arginine 143.

This sequence belongs to the purine/pyrimidine phosphoribosyltransferase family. PyrE subfamily. Homodimer. It depends on Mg(2+) as a cofactor.

The enzyme catalyses orotidine 5'-phosphate + diphosphate = orotate + 5-phospho-alpha-D-ribose 1-diphosphate. The protein operates within pyrimidine metabolism; UMP biosynthesis via de novo pathway; UMP from orotate: step 1/2. Functionally, catalyzes the transfer of a ribosyl phosphate group from 5-phosphoribose 1-diphosphate to orotate, leading to the formation of orotidine monophosphate (OMP). The protein is Orotate phosphoribosyltransferase of Pyrobaculum islandicum (strain DSM 4184 / JCM 9189 / GEO3).